The sequence spans 184 residues: Ribosome-recycling factor (184 aa).

It belongs to the RRF family.

The protein localises to the cytoplasm. Its function is as follows. Responsible for the release of ribosomes from messenger RNA at the termination of protein biosynthesis. May increase the efficiency of translation by recycling ribosomes from one round of translation to another. This chain is Ribosome-recycling factor, found in Aster yellows witches'-broom phytoplasma (strain AYWB).